We begin with the raw amino-acid sequence, 937 residues long: AP-2 complex subunit beta (937 aa).

An N-acetylthreonine modification is found at Thr-2. Ser-4 carries the post-translational modification Phosphoserine. Lys-265 carries the post-translational modification N6-acetyllysine. Tyr-737 is modified (phosphotyrosine; by SRC). Residues 841–937 are interaction with ARRB1; the sequence is WKDIPNENEL…YQVYDSILKN (97 aa). The residue at position 928 (Tyr-928) is a Phosphotyrosine.

The protein belongs to the adaptor complexes large subunit family. In terms of assembly, adaptor protein complex 2 (AP-2) is a heterotetramer composed of two large adaptins (alpha-type subunit AP2A1 or AP2A2 and beta-type subunit AP2B1), a medium adaptin (mu-type subunit AP2M1) and a small adaptin (sigma-type subunit AP2S1). Interacts with EPN1. Interacts with EPS15; clathrin competes with EPS15. Interacts with SNAP91; clathrin competes with SNAP91. Interacts with CLTC; clathrin competes with EPS15, SNAP91 and PIP5K1C. Interacts with LDLRAP1. Interacts with AMPH and BIN1. Interacts with ARF6 (GDP-bound). Interacts (dephosphorylated at Tyr-737) with ARRB1; phosphorylation of AP2B1 at Tyr-737 disrupts the interaction. Interacts with SLC2A8. Interacts with SCYL1 and SCYL2. Interacts with TGFBR1 and TGFBR2. Interacts with PIP5K1C; clathrin competes with PIP5K1C. Interacts with DENND1B, but not with DENND1A, nor DENND1C. Interacts with FCHO1. Interacts with RFTN1. Interacts with KIAA1107. Together with AP2A1 or AP2A2 and AP2M1, it interacts with ADAM10; this interaction facilitates ADAM10 endocytosis from the plasma membrane during long-term potentiation in hippocampal neurons. In terms of processing, phosphorylation at Tyr-737 by SRC occurs at the plasma membrane in clathrin-coated vesicles (CCVs). In terms of tissue distribution, expressed in the brain (at protein level).

Its subcellular location is the cell membrane. It is found in the membrane. It localises to the coated pit. In terms of biological role, component of the adaptor protein complex 2 (AP-2). Adaptor protein complexes function in protein transport via transport vesicles in different membrane traffic pathways. Adaptor protein complexes are vesicle coat components and appear to be involved in cargo selection and vesicle formation. AP-2 is involved in clathrin-dependent endocytosis in which cargo proteins are incorporated into vesicles surrounded by clathrin (clathrin-coated vesicles, CCVs) which are destined for fusion with the early endosome. The clathrin lattice serves as a mechanical scaffold but is itself unable to bind directly to membrane components. Clathrin-associated adaptor protein (AP) complexes which can bind directly to both the clathrin lattice and to the lipid and protein components of membranes are considered to be the major clathrin adaptors contributing the CCV formation. AP-2 also serves as a cargo receptor to selectively sort the membrane proteins involved in receptor-mediated endocytosis. AP-2 seems to play a role in the recycling of synaptic vesicle membranes from the presynaptic surface. AP-2 recognizes Y-X-X-[FILMV] (Y-X-X-Phi) and [ED]-X-X-X-L-[LI] endocytosis signal motifs within the cytosolic tails of transmembrane cargo molecules. AP-2 may also play a role in maintaining normal post-endocytic trafficking through the ARF6-regulated, non-clathrin pathway. During long-term potentiation in hippocampal neurons, AP-2 is responsible for the endocytosis of ADAM10. The AP-2 beta subunit acts via its C-terminal appendage domain as a scaffolding platform for endocytic accessory proteins; at least some clathrin-associated sorting proteins (CLASPs) are recognized by their [DE]-X(1,2)-F-X-X-[FL]-X-X-X-R motif. The AP-2 beta subunit binds to clathrin heavy chain, promoting clathrin lattice assembly; clathrin displaces at least some CLASPs from AP2B1 which probably then can be positioned for further coat assembly. This is AP-2 complex subunit beta (AP2B1) from Homo sapiens (Human).